A 159-amino-acid polypeptide reads, in one-letter code: LOB domain-containing protein 25 (159 aa).

Residues 38-139 (SPCAACKFLR…RELEETNADL (102 aa)) form the LOB domain.

This sequence belongs to the LOB domain-containing protein family. As to expression, expressed in young shoots, roots, stems, leaves and flowers.

The chain is LOB domain-containing protein 25 (LBD25) from Arabidopsis thaliana (Mouse-ear cress).